A 360-amino-acid chain; its full sequence is Histidinol-phosphate aminotransferase (360 aa).

Lys-223 is modified (N6-(pyridoxal phosphate)lysine).

It belongs to the class-II pyridoxal-phosphate-dependent aminotransferase family. Histidinol-phosphate aminotransferase subfamily. In terms of assembly, homodimer. The cofactor is pyridoxal 5'-phosphate.

The enzyme catalyses L-histidinol phosphate + 2-oxoglutarate = 3-(imidazol-4-yl)-2-oxopropyl phosphate + L-glutamate. The protein operates within amino-acid biosynthesis; L-histidine biosynthesis; L-histidine from 5-phospho-alpha-D-ribose 1-diphosphate: step 7/9. The sequence is that of Histidinol-phosphate aminotransferase from Bacillus velezensis (strain DSM 23117 / BGSC 10A6 / LMG 26770 / FZB42) (Bacillus amyloliquefaciens subsp. plantarum).